The chain runs to 181 residues: RING-H2 finger protein ATL72 (181 aa).

Residues 34-54 traverse the membrane as a helical segment; it reads VIILAALLCALICALSLNSAL. An RING-type; atypical zinc finger spans residues 114–156; it reads CLICLGDFEDGEKVRVLPKCNHGFHVRCIDTWLLSRSSCPTCR.

Belongs to the RING-type zinc finger family. ATL subfamily.

The protein resides in the membrane. It catalyses the reaction S-ubiquitinyl-[E2 ubiquitin-conjugating enzyme]-L-cysteine + [acceptor protein]-L-lysine = [E2 ubiquitin-conjugating enzyme]-L-cysteine + N(6)-ubiquitinyl-[acceptor protein]-L-lysine.. The protein operates within protein modification; protein ubiquitination. The chain is RING-H2 finger protein ATL72 (ATL72) from Arabidopsis thaliana (Mouse-ear cress).